We begin with the raw amino-acid sequence, 142 residues long: Large ribosomal subunit protein uL13 (142 aa).

It belongs to the universal ribosomal protein uL13 family. In terms of assembly, part of the 50S ribosomal subunit.

Its function is as follows. This protein is one of the early assembly proteins of the 50S ribosomal subunit, although it is not seen to bind rRNA by itself. It is important during the early stages of 50S assembly. The sequence is that of Large ribosomal subunit protein uL13 from Treponema denticola (strain ATCC 35405 / DSM 14222 / CIP 103919 / JCM 8153 / KCTC 15104).